We begin with the raw amino-acid sequence, 505 residues long: Glycerol kinase (505 aa).

Threonine 14 serves as a coordination point for ADP. Positions 14, 15, and 16 each coordinate ATP. Threonine 14 contributes to the sn-glycerol 3-phosphate binding site. Residue arginine 18 participates in ADP binding. Arginine 84, glutamate 85, tyrosine 136, and aspartate 246 together coordinate sn-glycerol 3-phosphate. The glycerol site is built by arginine 84, glutamate 85, tyrosine 136, aspartate 246, and glutamine 247. Residues threonine 268 and glycine 311 each contribute to the ADP site. 4 residues coordinate ATP: threonine 268, glycine 311, glutamine 315, and glycine 412. 2 residues coordinate ADP: glycine 412 and asparagine 416.

The protein belongs to the FGGY kinase family.

It carries out the reaction glycerol + ATP = sn-glycerol 3-phosphate + ADP + H(+). Its pathway is polyol metabolism; glycerol degradation via glycerol kinase pathway; sn-glycerol 3-phosphate from glycerol: step 1/1. Its activity is regulated as follows. Inhibited by fructose 1,6-bisphosphate (FBP). Functionally, key enzyme in the regulation of glycerol uptake and metabolism. Catalyzes the phosphorylation of glycerol to yield sn-glycerol 3-phosphate. This is Glycerol kinase from Vibrio campbellii (strain ATCC BAA-1116).